We begin with the raw amino-acid sequence, 1284 residues long: Collagen alpha-1(XX) chain (1284 aa).

The N-terminal stretch at 1-22 (MSSGDPAHLGLCLWLWLGATLG) is a signal peptide. The Fibronectin type-III 1 domain maps to 28 to 119 (ASGLLRLAVL…EFVIEDLKSS (92 aa)). Positions 122 to 171 (DRSSQRPLGSGAPEPTPSHTGSPDPEQASEPQVAFTPSQDPRTPAGPQFR) are disordered. The region spanning 179 to 354 (DMVFLVDGSW…GALAGLLSRL (176 aa)) is the VWFA domain. 5 consecutive Fibronectin type-III domains span residues 379 to 468 (APTS…APLP), 469 to 559 (PPRA…TLAP), 560 to 647 (PRHL…TKKA), 649 to 738 (SPSQ…TPST), and 743 to 833 (PPSN…ACPA). An N-linked (GlcNAc...) asparagine glycan is attached at Asn607. Positions 842-1037 (GFDLMVAFSL…LQMLQIVCSD (196 aa)) constitute a Laminin G-like domain. Disordered regions lie at residues 1065-1190 (SCSS…EKGE) and 1212-1284 (SFHE…GLWE). Positions 1071 to 1082 (PGPPGPQGPPGL) are enriched in pro residues. Collagen-like domains lie at 1071-1127 (PGPP…IPGR) and 1133-1190 (PKGM…EKGE). 2 stretches are compositionally biased toward low complexity: residues 1112 to 1125 (LPGL…QGIP) and 1166 to 1181 (ERGP…LPGP). A compositionally biased stretch (polar residues) spans 1271-1284 (SPGQQGASTQGLWE).

As to expression, high expression in heart, lung, liver, skeletal muscle, kidney, pancreas, spleen, testis, ovary, subthalamic nucleus and fetal liver. Weak expression in other tissues tested.

It is found in the secreted. It localises to the extracellular space. Functionally, probable collagen protein. The polypeptide is Collagen alpha-1(XX) chain (COL20A1) (Homo sapiens (Human)).